Reading from the N-terminus, the 21-residue chain is Fibrinogen beta chain (21 aa).

Q1 is subject to Pyrrolidone carboxylic acid. Acidic residues predominate over residues 1–11; that stretch reads QHSTDYDEVED. The tract at residues 1–21 is disordered; it reads QHSTDYDEVEDDRAKLHLDAR. A glycan (O-linked (GalNAc...) threonine) is linked at T4. Position 6 is a sulfotyrosine (Y6). Positions 12-21 are enriched in basic and acidic residues; sequence DRAKLHLDAR.

Heterohexamer; disulfide linked. Contains 2 sets of 3 non-identical chains (alpha, beta and gamma). The 2 heterotrimers are in head to head conformation with the N-termini in a small central domain. Post-translationally, conversion of fibrinogen to fibrin is triggered by thrombin, which cleaves fibrinopeptides A and B from alpha and beta chains, and thus exposes the N-terminal polymerization sites responsible for the formation of the soft clot.

Its subcellular location is the secreted. Functionally, cleaved by the protease thrombin to yield monomers which, together with fibrinogen alpha (FGA) and fibrinogen gamma (FGG), polymerize to form an insoluble fibrin matrix. Fibrin has a major function in hemostasis as one of the primary components of blood clots. In addition, functions during the early stages of wound repair to stabilize the lesion and guide cell migration during re-epithelialization. Was originally thought to be essential for platelet aggregation, based on in vitro studies using anticoagulated blood. However subsequent studies have shown that it is not absolutely required for thrombus formation in vivo. Enhances expression of SELP in activated platelets. Maternal fibrinogen is essential for successful pregnancy. Fibrin deposition is also associated with infection, where it protects against IFNG-mediated hemorrhage. May also facilitate the antibacterial immune response via both innate and T-cell mediated pathways. The chain is Fibrinogen beta chain (FGB) from Muntiacus muntjak (Barking deer).